The chain runs to 217 residues: Peptide methionine sulfoxide reductase MsrA (217 aa).

Cysteine 54 is an active-site residue.

Belongs to the MsrA Met sulfoxide reductase family.

It catalyses the reaction L-methionyl-[protein] + [thioredoxin]-disulfide + H2O = L-methionyl-(S)-S-oxide-[protein] + [thioredoxin]-dithiol. The catalysed reaction is [thioredoxin]-disulfide + L-methionine + H2O = L-methionine (S)-S-oxide + [thioredoxin]-dithiol. Functionally, has an important function as a repair enzyme for proteins that have been inactivated by oxidation. Catalyzes the reversible oxidation-reduction of methionine sulfoxide in proteins to methionine. This is Peptide methionine sulfoxide reductase MsrA from Maricaulis maris (strain MCS10) (Caulobacter maris).